Reading from the N-terminus, the 148-residue chain is 1,4-dihydroxy-2-naphthoyl-CoA hydrolase (148 aa).

D15 is a catalytic residue.

The protein belongs to the 4-hydroxybenzoyl-CoA thioesterase family. DHNA-CoA hydrolase subfamily.

The enzyme catalyses 1,4-dihydroxy-2-naphthoyl-CoA + H2O = 1,4-dihydroxy-2-naphthoate + CoA + H(+). Its pathway is cofactor biosynthesis; phylloquinone biosynthesis. The protein operates within quinol/quinone metabolism; 1,4-dihydroxy-2-naphthoate biosynthesis; 1,4-dihydroxy-2-naphthoate from chorismate: step 7/7. Catalyzes the hydrolysis of 1,4-dihydroxy-2-naphthoyl-CoA (DHNA-CoA) to 1,4-dihydroxy-2-naphthoate (DHNA), a reaction involved in phylloquinone (vitamin K1) biosynthesis. The chain is 1,4-dihydroxy-2-naphthoyl-CoA hydrolase from Nostoc sp. (strain PCC 7120 / SAG 25.82 / UTEX 2576).